The following is a 576-amino-acid chain: MPALSTGSGSDTGLYELLAALPAQLQPHVDSQEDLTFLWDMFGEKSLHSLVKIHEKLHYYEKQSPVPILHGAAALADDLAEELQNKPLNSEIRELLKLLSKPNVKALLSVHDTVAQKNYDPVLPPMPEDIDDEEDSVKIIRLVKNREPLGATIKKDEQTGAIIVARIMRGGAADRSGLIHVGDELREVNGIPVEDKRPEEIIQILAQSQGAITFKIIPGSKEETPSKEGKMFIKALFDYNPNEDKAIPCKEAGLSFKKGDILQIMSQDDATWWQAKHEADANPRAGLIPSKHFQERRLALRRPEILVQPLKVSNRKSSGFRKSFRLSRKDKKTNKSMYECKKSDQYDTADVPTYEEVTPYRRQTNEKYRLVVLVGPVGVGLNELKRKLLISDTQHYGVTVPHTTRARRSQESDGVEYIFISKHLFETDVQNNKFIEYGEYKNNYYGTSIDSVRSVLAKNKVCLLDVQPHTVKHLRTLEFKPYVIFIKPPSIERLRETRKNAKIISSRDDQGAAKPFTEEDFQEMIKSAQIMESQYGHLFDKIIINDDLTVAFNELKTTFDKLETETHWVPVSWLHS.

2 L27 domains span residues 10–65 (SDTG…KQSP) and 67–122 (PILH…YDPV). The 82-residue stretch at 139–220 (IIRLVKNREP…AITFKIIPGS (82 aa)) folds into the PDZ domain. The SH3 domain occupies 228-298 (EGKMFIKALF…PSKHFQERRL (71 aa)). A phospho-regulated basic and hydrophobic (PRBH) motif region spans residues 289–383 (PSKHFQERRL…VGPVGVGLNE (95 aa)). The 193-residue stretch at 368 to 560 (YRLVVLVGPV…AFNELKTTFD (193 aa)) folds into the Guanylate kinase-like domain. S409 is modified (phosphoserine).

Belongs to the MAGUK family. Heterodimer; able to heterodimerize via its C-terminal L27 domain with LIN7A, LIN7B and LIN7C. Forms a tripartite complex composed of DLG1, MPP7 and LIN7 (LIN7A or LIN7C). Interacts with DLG1 via its N-terminal L27 domain. Interacts with PALS1 and PATJ. In terms of processing, phosphorylated by aPKC which promotes dissociation from the cell cortex.

Its subcellular location is the membrane. The protein localises to the lateral cell membrane. The protein resides in the cell junction. It is found in the tight junction. It localises to the adherens junction. Its subcellular location is the cytoplasm. The protein localises to the cell cortex. Acts as an important adapter that promotes epithelial cell polarity and tight junction formation via its interaction with DLG1. Involved in the assembly of protein complexes at sites of cell-cell contact. This chain is MAGUK p55 subfamily member 7 (MPP7), found in Homo sapiens (Human).